The sequence spans 141 residues: Large ribosomal subunit protein mL42 (141 aa).

The transit peptide at 1-31 (MTAAVKWAVSHRTIWRHLFPIQNGAISSACH) directs the protein to the mitochondrion.

It belongs to the mitochondrion-specific ribosomal protein mL42 family. Component of the mitochondrial ribosome large subunit (39S) which comprises a 16S rRNA and about 50 distinct proteins. Component of the mitochondrial ribosome small subunit (28S) which comprises a 12S rRNA and about 30 distinct proteins.

It localises to the mitochondrion. The sequence is that of Large ribosomal subunit protein mL42 (Mrpl42) from Rattus norvegicus (Rat).